The chain runs to 393 residues: Acetylornithine aminotransferase (393 aa).

Residues 95-96 and phenylalanine 127 each bind pyridoxal 5'-phosphate; that span reads GA. Residue arginine 130 participates in N(2)-acetyl-L-ornithine binding. 214-217 is a pyridoxal 5'-phosphate binding site; sequence DEVQ. At lysine 243 the chain carries N6-(pyridoxal phosphate)lysine. Serine 271 contacts N(2)-acetyl-L-ornithine. Threonine 272 contributes to the pyridoxal 5'-phosphate binding site.

The protein belongs to the class-III pyridoxal-phosphate-dependent aminotransferase family. ArgD subfamily. As to quaternary structure, homodimer. Requires pyridoxal 5'-phosphate as cofactor.

The protein resides in the cytoplasm. The enzyme catalyses N(2)-acetyl-L-ornithine + 2-oxoglutarate = N-acetyl-L-glutamate 5-semialdehyde + L-glutamate. Its pathway is amino-acid biosynthesis; L-arginine biosynthesis; N(2)-acetyl-L-ornithine from L-glutamate: step 4/4. This chain is Acetylornithine aminotransferase, found in Nitrosomonas europaea (strain ATCC 19718 / CIP 103999 / KCTC 2705 / NBRC 14298).